Reading from the N-terminus, the 232-residue chain is C4-dicarboxylate TRAP transporter small permease protein DctQ (232 aa).

The next 4 helical transmembrane spans lie at Glu-30 to Met-50, Ile-58 to Ser-78, Leu-103 to Ser-123, and Phe-167 to Ile-187.

This sequence belongs to the TRAP transporter small permease family. The complex comprises the extracytoplasmic solute receptor protein DctP, and the two transmembrane proteins DctQ and DctM.

The protein localises to the cell inner membrane. Part of the tripartite ATP-independent periplasmic (TRAP) transport system DctPQM involved in C4-dicarboxylates uptake. The chain is C4-dicarboxylate TRAP transporter small permease protein DctQ from Vibrio cholerae serotype O1 (strain ATCC 39315 / El Tor Inaba N16961).